Here is a 362-residue protein sequence, read N- to C-terminus: 3-dehydroquinate synthase (362 aa).

Residues 73-78, 107-111, 131-132, Lys-144, Lys-153, and 171-174 each bind NAD(+); these read DAEAGK, GAATD, TT, and TLQT. Residues Glu-186, His-249, and His-265 each coordinate Zn(2+).

The protein belongs to the sugar phosphate cyclases superfamily. Dehydroquinate synthase family. NAD(+) is required as a cofactor. It depends on Co(2+) as a cofactor. Requires Zn(2+) as cofactor.

It localises to the cytoplasm. It carries out the reaction 7-phospho-2-dehydro-3-deoxy-D-arabino-heptonate = 3-dehydroquinate + phosphate. Its pathway is metabolic intermediate biosynthesis; chorismate biosynthesis; chorismate from D-erythrose 4-phosphate and phosphoenolpyruvate: step 2/7. In terms of biological role, catalyzes the conversion of 3-deoxy-D-arabino-heptulosonate 7-phosphate (DAHP) to dehydroquinate (DHQ). In Mycobacterium bovis (strain ATCC BAA-935 / AF2122/97), this protein is 3-dehydroquinate synthase.